The chain runs to 539 residues: Heparanase-like protein 2 (539 aa).

The N-terminal stretch at 1 to 21 is a signal peptide; that stretch reads MGFNVVVFLSCLLLLPPVTFG. Residues asparagine 143, asparagine 163, and asparagine 181 are each glycosylated (N-linked (GlcNAc...) asparagine). Glutamate 198 functions as the Proton donor in the catalytic mechanism. A glycan (N-linked (GlcNAc...) asparagine) is linked at asparagine 300. The active-site Nucleophile is glutamate 316. Asparagine 421 is a glycosylation site (N-linked (GlcNAc...) asparagine).

Belongs to the glycosyl hydrolase 79 family.

The protein resides in the lysosome membrane. Its subcellular location is the secreted. Endoglycosidase which is a cell surface and extracellular matrix-degrading enzyme. Cleaves heparan sulfate proteoglycans (HSPGs) into heparan sulfate side chains and core proteoglycans. In Arabidopsis thaliana (Mouse-ear cress), this protein is Heparanase-like protein 2.